We begin with the raw amino-acid sequence, 309 residues long: Homoserine O-succinyltransferase (309 aa).

C142 acts as the Acyl-thioester intermediate in catalysis. Substrate-binding residues include K163 and S192. Catalysis depends on H235, which acts as the Proton acceptor. Residue E237 is part of the active site. R249 provides a ligand contact to substrate.

It belongs to the MetA family. Homodimer.

Its subcellular location is the cytoplasm. It catalyses the reaction L-homoserine + succinyl-CoA = O-succinyl-L-homoserine + CoA. The protein operates within amino-acid biosynthesis; L-methionine biosynthesis via de novo pathway; O-succinyl-L-homoserine from L-homoserine: step 1/1. Transfers a succinyl group from succinyl-CoA to L-homoserine, forming succinyl-L-homoserine. This Escherichia coli (strain ATCC 8739 / DSM 1576 / NBRC 3972 / NCIMB 8545 / WDCM 00012 / Crooks) protein is Homoserine O-succinyltransferase.